A 302-amino-acid polypeptide reads, in one-letter code: Recombination-associated protein RdgC (302 aa).

The protein belongs to the RdgC family.

It is found in the cytoplasm. It localises to the nucleoid. May be involved in recombination. The sequence is that of Recombination-associated protein RdgC from Actinobacillus pleuropneumoniae serotype 7 (strain AP76).